The chain runs to 426 residues: MQVKLKVLLIGSGGRESAIAFYLRKSVLLSELKVFPGNGGFPDQELLPPDSFQVLDKNSVQSFLKQNPFDLIVVGPEDPLVAGFADWAAELNIPVFGPDSFCAQVEGSKDFAKSLMTEAKIPTAEYKTFSEYSDSLKYLESKSIPIVIKADGLAAGKGVTVATSKEMAQTALKEIFKDKKFGSSGNQVVIEEFMEGQEASIFAISDGDSYFLLPAAQDHKRAFDGDQGPNTGGMGAYCPAPVISESILQKVKEQIFDPMFDLFRKKGHPYRGLLYAGLMISPNGEPKVVEFNCRFGDPETQCVLAMLDGDLLELLYRASTGKIKGIQAAVKKGAAVVVVLAAQGYPDFYEKNIPLNLPETSGQNVHLFHAGTLKKDGKVFSSGGRILGIVAQGADLKSSVDQAYSFLEKIQAPKTFYRKDIGYRAL.

The ATP-grasp domain maps to 113-320 (KSLMTEAKIP…LLELLYRAST (208 aa)). 139-200 (LESKSIPIVI…EEFMEGQEAS (62 aa)) is an ATP binding site. Mg(2+)-binding residues include Glu290 and Asn292.

The protein belongs to the GARS family. It depends on Mg(2+) as a cofactor. Mn(2+) serves as cofactor.

It catalyses the reaction 5-phospho-beta-D-ribosylamine + glycine + ATP = N(1)-(5-phospho-beta-D-ribosyl)glycinamide + ADP + phosphate + H(+). It functions in the pathway purine metabolism; IMP biosynthesis via de novo pathway; N(1)-(5-phospho-D-ribosyl)glycinamide from 5-phospho-alpha-D-ribose 1-diphosphate: step 2/2. This Leptospira interrogans serogroup Icterohaemorrhagiae serovar copenhageni (strain Fiocruz L1-130) protein is Phosphoribosylamine--glycine ligase.